The following is a 151-amino-acid chain: Deoxyuridine 5'-triphosphate nucleotidohydrolase (151 aa).

Substrate is bound by residues 70-72 (RSG), asparagine 83, 87-89 (LID), and methionine 97.

This sequence belongs to the dUTPase family. Mg(2+) is required as a cofactor.

The catalysed reaction is dUTP + H2O = dUMP + diphosphate + H(+). The protein operates within pyrimidine metabolism; dUMP biosynthesis; dUMP from dCTP (dUTP route): step 2/2. This enzyme is involved in nucleotide metabolism: it produces dUMP, the immediate precursor of thymidine nucleotides and it decreases the intracellular concentration of dUTP so that uracil cannot be incorporated into DNA. This is Deoxyuridine 5'-triphosphate nucleotidohydrolase from Pseudomonas syringae pv. tomato (strain ATCC BAA-871 / DC3000).